Here is a 245-residue protein sequence, read N- to C-terminus: 14-3-3 protein zeta/delta (245 aa).

Met1 carries the post-translational modification N-acetylmethionine. At Lys3 the chain carries N6-acetyllysine. Ser58 is modified (phosphoserine; by PKA). Lys68 carries the N6-acetyllysine modification. Residues Ser184, Ser207, and Ser210 each carry the phosphoserine modification. Residue Thr232 is modified to Phosphothreonine; by CK1.

It belongs to the 14-3-3 family. As to quaternary structure, homodimer. Heterodimerizes with YWHAE. Homo- and heterodimerization is inhibited by phosphorylation on Ser-58. Interacts with FOXO4, NOXA1, SSH1 ARHGEF2, CDK16 and BSPRY. Interacts with WEE1 (C-terminal). Interacts with MLF1 (phosphorylated form); the interaction retains it in the cytoplasm. Interacts with BAX; the interaction occurs in the cytoplasm. Under stress conditions, MAPK8-mediated phosphorylation releases BAX to mitochondria. Interacts with TP53; the interaction enhances p53 transcriptional activity. The Ser-58 phosphorylated form inhibits this interaction and p53 transcriptional activity. Interacts with ABL1 (phosphorylated form); the interaction retains ABL1 in the cytoplasm. Interacts with PKA-phosphorylated AANAT; the interaction modulates AANAT enzymatic activity by increasing affinity for arylalkylamines and acetyl-CoA and protecting the enzyme from dephosphorylation and proteasomal degradation. It may also prevent thiol-dependent inactivation. Interacts with AKT1; the interaction phosphorylates YWHAZ and modulates dimerization. Interacts with GAB2. Interacts with BCL2L11, SAMSN1 and TLK2. Interacts with phosphorylated RAF1; the interaction is inhibited when YWHAZ is phosphorylated on Thr-232. Interacts with Thr-phosphorylated ITGB2. Interacts with the 'Thr-369' phosphorylated form of DAPK2. Interacts with PI4KB, TBC1D22A and TBC1D22B. Interacts with ZFP36L1 (via phosphorylated form); this interaction occurs in a p38 MAPK- and AKT-signaling pathways. Interacts with SLITRK1. Interacts with AK5, LDB1, MADD, MARK3, PDE1A and SMARCB1. Interacts with YWHAZ. Interacts with MEFV. Interacts with ADAM22 (via C-terminus). Post-translationally, the delta, brain-specific form differs from the zeta form in being phosphorylated. Phosphorylation on Ser-184 by MAPK8; promotes dissociation of BAX and translocation of BAX to mitochondria. Phosphorylation on Thr-232; inhibits binding of RAF1. Phosphorylated on Ser-58 by PKA and protein kinase C delta type catalytic subunit in a sphingosine-dependent fashion. Phosphorylation on Ser-58 by PKA; disrupts homodimerization and heterodimerization with YHAE and TP53.

It is found in the cytoplasm. It localises to the melanosome. Its function is as follows. Adapter protein implicated in the regulation of a large spectrum of both general and specialized signaling pathways. Binds to a large number of partners, usually by recognition of a phosphoserine or phosphothreonine motif. Binding generally results in the modulation of the activity of the binding partner. Promotes cytosolic retention and inactivation of TFEB transcription factor by binding to phosphorylated TFEB. Induces ARHGEF7 activity on RAC1 as well as lamellipodia and membrane ruffle formation. In neurons, regulates spine maturation through the modulation of ARHGEF7 activity. This chain is 14-3-3 protein zeta/delta (YWHAZ), found in Bos taurus (Bovine).